The chain runs to 384 residues: Sialyltransferase-like protein 3 (384 aa).

Residues 1–5 (MKRRH) are Cytoplasmic-facing. A helical; Signal-anchor for type II membrane protein transmembrane segment spans residues 6–26 (WSHPSCGLLLLVAVFCLLLVF). Residues 27-384 (RCSQLRHSGD…FRLPPVSFYR (358 aa)) lie on the Lumenal side of the membrane. N-linked (GlcNAc...) asparagine glycosylation is present at N241.

The protein belongs to the glycosyltransferase 29 family.

The protein localises to the golgi apparatus membrane. Functionally, possesses sialyltransferase-like activity in vitro. Transfers sialic acid to the glycoprotein asialofetuin. The transferred sialic acid is linked to galactose of Gal-beta-1,3-GalNAc through alpha-2,6-linkage. In Oryza sativa subsp. japonica (Rice), this protein is Sialyltransferase-like protein 3.